Here is a 349-residue protein sequence, read N- to C-terminus: Pseudouridylate synthase TRUB1 (349 aa).

An N-acetylalanine modification is found at Ala-2. The residue at position 11 (Ser-11) is a Phosphoserine. The Nucleophile role is filled by Asp-121.

The protein belongs to the pseudouridine synthase TruB family. Highly expressed in heart, skeletal muscle and liver. Expressed at lower levels in lung, small intestine, kidney and spleen.

It localises to the nucleus. The protein localises to the cytoplasm. It is found in the cytosol. It catalyses the reaction a uridine in mRNA = a pseudouridine in mRNA. The catalysed reaction is a uridine in tRNA = a pseudouridine in tRNA. It carries out the reaction uridine(55) in tRNA = pseudouridine(55) in tRNA. Its function is as follows. Pseudouridine synthase that catalyzes pseudouridylation of mRNAs and tRNAs. Mediates pseudouridylation of mRNAs with the consensus sequence 5'-GUUCNANNC-3', harboring a stem-loop structure. Constitutes the major pseudouridine synthase acting on mRNAs. Also catalyzes pseudouridylation of some tRNAs, including synthesis of pseudouridine(55) from uracil-55, in the psi GC loop of a subset of tRNAs. Promotes the processing of pri-let-7 microRNAs (pri-miRNAs) independently of its RNA pseudouridylate synthase activity. Acts by binding to the stem-loop structure on pri-let-7, preventing LIN28-binding (LIN28A and/or LIN28B), thereby enhancing the interaction between pri-let-7 and the microprocessor DGCR8, which mediates miRNA maturation. The sequence is that of Pseudouridylate synthase TRUB1 from Homo sapiens (Human).